Reading from the N-terminus, the 117-residue chain is Large ribosomal subunit protein bL19 (117 aa).

The protein belongs to the bacterial ribosomal protein bL19 family.

Its function is as follows. This protein is located at the 30S-50S ribosomal subunit interface and may play a role in the structure and function of the aminoacyl-tRNA binding site. In Cutibacterium acnes (strain DSM 16379 / KPA171202) (Propionibacterium acnes), this protein is Large ribosomal subunit protein bL19.